We begin with the raw amino-acid sequence, 192 residues long: Sarcoplasmic calcium-binding protein 1 (192 aa).

N-acetylalanine is present on Ala-1. 4 EF-hand domains span residues 4-39, 56-91, 100-135, and 136-171; these read WDNR…NTLI, IMSN…VCVG, AFKV…RSAF, and ANIK…YAQF. Ca(2+) is bound by residues Asp-17, Asp-19, Asn-21, Asp-28, Asp-69, Asn-71, Asp-73, Glu-75, Glu-80, Asp-113, Asn-115, Asp-117, and Glu-124.

As to quaternary structure, SCPs from crayfish, lobster, and shrimp are polymorphic dimers.

In terms of biological role, like parvalbumins, SCPs seem to be more abundant in fast contracting muscles, but no functional relationship can be established from this distribution. This is Sarcoplasmic calcium-binding protein 1 from Astacus leptodactylus (Turkish narrow-clawed crayfish).